The chain runs to 215 residues: MVLKVYGPHFASPKRALVTLIEKGVAFETIPVDLMKGEHKQPAYLALQPFGTVPAVVDGDYKIFESRAVMRYVAEKYRSQGPDLLGKTVEDRGQVEQWLDVEATTYHPPLLNLTLHIMFASVMGFPSDEKLIKESEEKLAGVLDVYEAHLSKSKYLAGDFVSLADLAHLPFTDYLVGPIGKAYMIKDRKHVSAWWDDISSRPAWKETVAKYSFPA.

Residues 2-81 (VLKVYGPHFA…YVAEKYRSQG (80 aa)) form the GST N-terminal domain. Residue 11 to 12 (AS) coordinates glutathione. Residue Ser12 is modified to Phosphoserine. The residue at position 35 (Met35) is a Methionine sulfoxide. Residues 39 to 40 (HK), 52 to 53 (TV), and 65 to 66 (ES) contribute to the glutathione site. Residues 88-215 (TVEDRGQVEQ…ETVAKYSFPA (128 aa)) form the GST C-terminal domain. Methionine sulfoxide is present on residues Met118, Met123, and Met184.

Belongs to the GST superfamily. Phi family. Post-translationally, oxidated at Met-35, Met-118, Met-123 and Met-184 in oxidative stress conditions (e.g. hydrogen peroxide H(2)O(2)).

The protein localises to the cytoplasm. It localises to the cytosol. It carries out the reaction RX + glutathione = an S-substituted glutathione + a halide anion + H(+). Its activity is regulated as follows. Redox-regulated enzyme; in oxidative stress conditions methionine oxidation ensure a thermodynamic and structural compensatory mechanism to guarantee H(2)O(2) peroxidase activity despite transferase activity inhibition. In terms of biological role, in vitro, possesses glutathione S-transferase activity toward 1-chloro-2,4-dinitrobenzene (CDNB) and benzyl isothiocyanate (BITC), and glutathione peroxidase activity toward cumene hydroperoxide and linoleic acid-13-hydroperoxide. May be involved in the conjugation of reduced glutathione to a wide number of exogenous and endogenous hydrophobic electrophiles and have a detoxification role against certain herbicides. In Arabidopsis thaliana (Mouse-ear cress), this protein is Glutathione S-transferase F9.